The sequence spans 199 residues: Large ribosomal subunit protein bL17 (199 aa).

Residues 123-199 are disordered; it reads DEANRARRAA…EESEAKDDTK (77 aa). Basic and acidic residues predominate over residues 137–152; sequence KADERADEKADEKAEE. Residues 153–199 are compositionally biased toward acidic residues; it reads TVEETTEAPAEESTEAAAEETVEETTEAPAEESTEAAEESEAKDDTK.

The protein belongs to the bacterial ribosomal protein bL17 family. Part of the 50S ribosomal subunit. Contacts protein L32.

The polypeptide is Large ribosomal subunit protein bL17 (Mycolicibacterium smegmatis (strain ATCC 700084 / mc(2)155) (Mycobacterium smegmatis)).